Consider the following 405-residue polypeptide: Tryptophan synthase beta chain (405 aa).

Lysine 98 is subject to N6-(pyridoxal phosphate)lysine.

The protein belongs to the TrpB family. Tetramer of two alpha and two beta chains. The cofactor is pyridoxal 5'-phosphate.

It catalyses the reaction (1S,2R)-1-C-(indol-3-yl)glycerol 3-phosphate + L-serine = D-glyceraldehyde 3-phosphate + L-tryptophan + H2O. It functions in the pathway amino-acid biosynthesis; L-tryptophan biosynthesis; L-tryptophan from chorismate: step 5/5. Functionally, the beta subunit is responsible for the synthesis of L-tryptophan from indole and L-serine. The sequence is that of Tryptophan synthase beta chain from Xylella fastidiosa (strain M12).